A 338-amino-acid polypeptide reads, in one-letter code: RNA 3'-terminal phosphate cyclase (338 aa).

Residues Gln103 and 283-287 (YLADQ) each bind ATP. His308 acts as the Tele-AMP-histidine intermediate in catalysis.

This sequence belongs to the RNA 3'-terminal cyclase family. Type 1 subfamily.

Its subcellular location is the cytoplasm. It catalyses the reaction a 3'-end 3'-phospho-ribonucleotide-RNA + ATP = a 3'-end 2',3'-cyclophospho-ribonucleotide-RNA + AMP + diphosphate. Its function is as follows. Catalyzes the conversion of 3'-phosphate to a 2',3'-cyclic phosphodiester at the end of RNA. The mechanism of action of the enzyme occurs in 3 steps: (A) adenylation of the enzyme by ATP; (B) transfer of adenylate to an RNA-N3'P to produce RNA-N3'PP5'A; (C) and attack of the adjacent 2'-hydroxyl on the 3'-phosphorus in the diester linkage to produce the cyclic end product. The biological role of this enzyme is unknown but it is likely to function in some aspects of cellular RNA processing. This chain is RNA 3'-terminal phosphate cyclase, found in Escherichia coli O127:H6 (strain E2348/69 / EPEC).